The following is a 199-amino-acid chain: MLVPIVVEQTGRGERSYDIYSRLLKDRIIFLGGGIDDNVANLVIAQLLFLEAEDPDKDIHLYINSPGGVVTAGMAIYDTMRYIKAPVSTICVGQAASMGAFLLSGGEKGKRYSLVNSRIMIHQPLGGFQGQATDIHIHAKEILRMKDQLNALLAEHTGQSVEKVAADTERDYFMSGEEAKNYGIIDAIVTRNVVTGGAN.

Ser-97 (nucleophile) is an active-site residue. His-122 is a catalytic residue.

The protein belongs to the peptidase S14 family. In terms of assembly, fourteen ClpP subunits assemble into 2 heptameric rings which stack back to back to give a disk-like structure with a central cavity, resembling the structure of eukaryotic proteasomes.

It localises to the cytoplasm. The enzyme catalyses Hydrolysis of proteins to small peptides in the presence of ATP and magnesium. alpha-casein is the usual test substrate. In the absence of ATP, only oligopeptides shorter than five residues are hydrolyzed (such as succinyl-Leu-Tyr-|-NHMec, and Leu-Tyr-Leu-|-Tyr-Trp, in which cleavage of the -Tyr-|-Leu- and -Tyr-|-Trp bonds also occurs).. Its function is as follows. Cleaves peptides in various proteins in a process that requires ATP hydrolysis. Has a chymotrypsin-like activity. Plays a major role in the degradation of misfolded proteins. The polypeptide is ATP-dependent Clp protease proteolytic subunit (Citrifermentans bemidjiense (strain ATCC BAA-1014 / DSM 16622 / JCM 12645 / Bem) (Geobacter bemidjiensis)).